A 236-amino-acid chain; its full sequence is Glucosamine-6-phosphate deaminase (236 aa).

Catalysis depends on aspartate 67, which acts as the Proton acceptor; for enolization step. Asparagine 136 (for ring-opening step) is an active-site residue. The active-site Proton acceptor; for ring-opening step is the histidine 138. Glutamate 143 acts as the For ring-opening step in catalysis.

It belongs to the glucosamine/galactosamine-6-phosphate isomerase family. NagB subfamily.

The enzyme catalyses alpha-D-glucosamine 6-phosphate + H2O = beta-D-fructose 6-phosphate + NH4(+). Its pathway is amino-sugar metabolism; N-acetylneuraminate degradation; D-fructose 6-phosphate from N-acetylneuraminate: step 5/5. Its function is as follows. Catalyzes the reversible isomerization-deamination of glucosamine 6-phosphate (GlcN6P) to form fructose 6-phosphate (Fru6P) and ammonium ion. In Lachnoclostridium phytofermentans (strain ATCC 700394 / DSM 18823 / ISDg) (Clostridium phytofermentans), this protein is Glucosamine-6-phosphate deaminase.